Consider the following 203-residue polypeptide: Probable nicotinate-nucleotide adenylyltransferase (203 aa).

This sequence belongs to the NadD family.

The catalysed reaction is nicotinate beta-D-ribonucleotide + ATP + H(+) = deamido-NAD(+) + diphosphate. It functions in the pathway cofactor biosynthesis; NAD(+) biosynthesis; deamido-NAD(+) from nicotinate D-ribonucleotide: step 1/1. Its function is as follows. Catalyzes the reversible adenylation of nicotinate mononucleotide (NaMN) to nicotinic acid adenine dinucleotide (NaAD). In Dictyoglomus turgidum (strain DSM 6724 / Z-1310), this protein is Probable nicotinate-nucleotide adenylyltransferase.